The sequence spans 380 residues: Homoserine O-acetyltransferase (380 aa).

The AB hydrolase-1 domain occupies 70–366; that stretch reads NAVLVFHALT…SPHGHDAFLI (297 aa). Ser-186 (nucleophile) is an active-site residue. Arg-250 lines the substrate pocket. Active-site residues include Asp-333 and His-361. Asp-362 contacts substrate.

Belongs to the AB hydrolase superfamily. MetX family. Homodimer.

Its subcellular location is the cytoplasm. It catalyses the reaction L-homoserine + acetyl-CoA = O-acetyl-L-homoserine + CoA. Its pathway is amino-acid biosynthesis; L-methionine biosynthesis via de novo pathway; O-acetyl-L-homoserine from L-homoserine: step 1/1. Transfers an acetyl group from acetyl-CoA to L-homoserine, forming acetyl-L-homoserine. This is Homoserine O-acetyltransferase from Thermus thermophilus (strain ATCC BAA-163 / DSM 7039 / HB27).